The following is a 231-amino-acid chain: Protein RhiA (231 aa).

In terms of biological role, may be involved in plant-microbe interaction. The polypeptide is Protein RhiA (rhiA) (Rhizobium leguminosarum bv. viciae).